A 269-amino-acid polypeptide reads, in one-letter code: MNLNNLENIRYNEIKEFSDKIKKEFTFFQKKQVMDIIEKLNKDPRKNVIKLGQALEKFLNKYEEELKRTNNMYNFDRRYGNNYLIAGVDEVGRGPLAGPIVAAAVVLDLNVEEMQRIFNIKDSKKLSEKKREELDIIIREKAISYNIALVDNKTIDERGISWSNNEVLKRAVEGLKVKPDLVLSDGYAVKNLNIRNEFIIKGDSKSISIASSSIIAKVYRDNMMKEYSKGLNMYGFNHNAGYGTEEHVQAIKKYGPSKIHRMSFLTNIL.

In terms of domain architecture, RNase H type-2 spans 83 to 269 (YLIAGVDEVG…HRMSFLTNIL (187 aa)). 3 residues coordinate a divalent metal cation: D89, E90, and D185.

The protein belongs to the RNase HII family. Mn(2+) serves as cofactor. The cofactor is Mg(2+).

Its subcellular location is the cytoplasm. The catalysed reaction is Endonucleolytic cleavage to 5'-phosphomonoester.. Functionally, endonuclease that specifically degrades the RNA of RNA-DNA hybrids. This is Ribonuclease HII from Clostridium botulinum (strain Langeland / NCTC 10281 / Type F).